Reading from the N-terminus, the 50-residue chain is MVDLWPVSTRPRVLFRAAPSLLNSASAASMLWAELIAMAPSIPSALPPFS.

Ser-8 carries the post-translational modification Phosphoserine; by PKC.

In terms of tissue distribution, brain.

Functionally, neurite outgrowth factor. The chain is Sproutin from Rattus norvegicus (Rat).